A 117-amino-acid polypeptide reads, in one-letter code: Anti-sigma F factor antagonist (117 aa).

Residues 3 to 113 form the STAS domain; that stretch reads LGIDMNVKES…QSEQQALLTL (111 aa). Phosphoserine is present on Ser-58.

The protein belongs to the anti-sigma-factor antagonist family. In terms of processing, phosphorylated by SpoIIAB on a serine residue.

In terms of biological role, in the phosphorylated form it could act as an anti-anti-sigma factor that counteracts SpoIIAB and thus releases sigma f from inhibition. The chain is Anti-sigma F factor antagonist (spoIIAA) from Bacillus subtilis (strain 168).